The sequence spans 57 residues: Toxin GhoT (57 aa).

2 helical membrane-spanning segments follow: residues 7 to 27 (ILIF…FISH) and 37 to 57 (AFLV…FSLF).

This sequence belongs to the GhoT/OrtT toxin family.

It is found in the cell inner membrane. Its function is as follows. Toxic component of a type V toxin-antitoxin (TA) system. Causes membrane damage when induced by MqsR, slowing cell growth and leading to the formation of dormant persister cells; involved with GhoS, its antitoxin, in reducing cell growth during antibacterial stress. Its toxic effects are neutralized by GhoS, which digests ghoT transcripts in a sequence-specific manner. The protein is Toxin GhoT of Escherichia coli O157:H7.